A 240-amino-acid polypeptide reads, in one-letter code: Probable transcriptional regulatory protein Adeh_2184 (240 aa).

Belongs to the TACO1 family.

The protein resides in the cytoplasm. This chain is Probable transcriptional regulatory protein Adeh_2184, found in Anaeromyxobacter dehalogenans (strain 2CP-C).